The chain runs to 261 residues: Indole-3-glycerol phosphate synthase (261 aa).

This sequence belongs to the TrpC family.

The catalysed reaction is 1-(2-carboxyphenylamino)-1-deoxy-D-ribulose 5-phosphate + H(+) = (1S,2R)-1-C-(indol-3-yl)glycerol 3-phosphate + CO2 + H2O. The protein operates within amino-acid biosynthesis; L-tryptophan biosynthesis; L-tryptophan from chorismate: step 4/5. The polypeptide is Indole-3-glycerol phosphate synthase (Burkholderia ambifaria (strain ATCC BAA-244 / DSM 16087 / CCUG 44356 / LMG 19182 / AMMD) (Burkholderia cepacia (strain AMMD))).